A 236-amino-acid polypeptide reads, in one-letter code: Biosynthetic peptidoglycan transglycosylase (236 aa).

Residues 12-31 (ALLWFAAGSALVVLVLRWVP) form a helical membrane-spanning segment.

The protein belongs to the glycosyltransferase 51 family.

It localises to the cell inner membrane. It carries out the reaction [GlcNAc-(1-&gt;4)-Mur2Ac(oyl-L-Ala-gamma-D-Glu-L-Lys-D-Ala-D-Ala)](n)-di-trans,octa-cis-undecaprenyl diphosphate + beta-D-GlcNAc-(1-&gt;4)-Mur2Ac(oyl-L-Ala-gamma-D-Glu-L-Lys-D-Ala-D-Ala)-di-trans,octa-cis-undecaprenyl diphosphate = [GlcNAc-(1-&gt;4)-Mur2Ac(oyl-L-Ala-gamma-D-Glu-L-Lys-D-Ala-D-Ala)](n+1)-di-trans,octa-cis-undecaprenyl diphosphate + di-trans,octa-cis-undecaprenyl diphosphate + H(+). The protein operates within cell wall biogenesis; peptidoglycan biosynthesis. Functionally, peptidoglycan polymerase that catalyzes glycan chain elongation from lipid-linked precursors. The polypeptide is Biosynthetic peptidoglycan transglycosylase (Pseudomonas syringae pv. tomato (strain ATCC BAA-871 / DC3000)).